The following is a 137-amino-acid chain: Large ribosomal subunit protein uL16 (137 aa).

The span at Met-1 to Gln-13 shows a compositional bias: basic residues. A disordered region spans residues Met-1–Thr-22.

Belongs to the universal ribosomal protein uL16 family. Part of the 50S ribosomal subunit.

Binds 23S rRNA and is also seen to make contacts with the A and possibly P site tRNAs. The protein is Large ribosomal subunit protein uL16 of Azoarcus sp. (strain BH72).